Consider the following 554-residue polypeptide: Glucose-6-phosphate isomerase 1 (554 aa).

E359 serves as the catalytic Proton donor. Active-site residues include H390 and K518.

This sequence belongs to the GPI family.

The protein resides in the cytoplasm. The catalysed reaction is alpha-D-glucose 6-phosphate = beta-D-fructose 6-phosphate. The protein operates within carbohydrate biosynthesis; gluconeogenesis. It participates in carbohydrate degradation; glycolysis; D-glyceraldehyde 3-phosphate and glycerone phosphate from D-glucose: step 2/4. Its function is as follows. Catalyzes the reversible isomerization of glucose-6-phosphate to fructose-6-phosphate. The protein is Glucose-6-phosphate isomerase 1 of Pseudomonas putida (strain ATCC 47054 / DSM 6125 / CFBP 8728 / NCIMB 11950 / KT2440).